Here is a 101-residue protein sequence, read N- to C-terminus: MIPGEIFPAEGEILLNAERMQVTLVVSNAGDRPVQVGSHYHFAETNPALDFDREAARGMRLDIPAGTAVRFEPGQTREVRLVSYAGAREVYGFNGRIMGKL.

Belongs to the urease beta subunit family. In terms of assembly, heterotrimer of UreA (gamma), UreB (beta) and UreC (alpha) subunits. Three heterotrimers associate to form the active enzyme.

It localises to the cytoplasm. The enzyme catalyses urea + 2 H2O + H(+) = hydrogencarbonate + 2 NH4(+). It functions in the pathway nitrogen metabolism; urea degradation; CO(2) and NH(3) from urea (urease route): step 1/1. The polypeptide is Urease subunit beta (Cereibacter sphaeroides (strain ATCC 17025 / ATH 2.4.3) (Rhodobacter sphaeroides)).